The sequence spans 248 residues: Protein PARTING DANCERS homolog (248 aa).

The span at 1 to 10 shows a compositional bias: polar residues; sequence MERSTHSTGW. Residues 1–25 form a disordered region; the sequence is MERSTHSTGWTCLPPPPPEPAAPGR.

This sequence belongs to the ERCC1/RAD10/SWI10 family. As to quaternary structure, interacts with SHOC1 (via C-terminus). Interacts with HEI10. As to expression, highly expressed in anthers and pistil during meiosis. Expressed in pollen mother cells (PMCs) during meiosis. Expressed at low levels in roots, shoots, leaves, flowers, and glumes.

It localises to the chromosome. It is found in the nucleus. The protein localises to the cytoplasm. The protein resides in the cell membrane. In terms of biological role, essential for normal crossover (CO) formation during meiosis. Essential component for the formation of class I meiotic COs. Interacts with SHOC1, another meiotic component, to regulate CO formation, possibly by stabilizing the recombination intermediates during meiosis. PTD and SHOC1 may form transient heterotrimeric or heterotetrameric complexes with HEI10 and/or ZIP4 to promote class I COs formation. Does not seem to be involved in early meiotic recombination steps involving double-strand break (DSB) formation, processing, and single-strand invasion. Does not seem to be involved in homologous pairing or synaptonemal complex (SC) assembly. In Oryza sativa subsp. japonica (Rice), this protein is Protein PARTING DANCERS homolog.